Here is a 384-residue protein sequence, read N- to C-terminus: MKNLTILGSTGSIGVSTLEIVAAHPEKFKIIALTAGENIDLLKEQIDAFAPQLVAVKNEELALKLEGMLSCRKTAVMYGVEGMIAAATASDTNMVVAAIVGAAGLLPTSAAIEAGKDIALANKETLVTAGRLIMDMVKTRGVKLYPVDSEHSAVFQSLQGHRKEDVRRIILTASGGPFLNLSGEKLAQVTVKDALNHPNWSMGQKITIDSASMMNKGLEVIEASWLFDMPAEKISVNIHPQSIIHSMVEYNDGCVMAQMGIPDMKAPIAYALTYPGRVPTGVKPLDLTTLSGLTFFNPDVVRFPALQLAYRAMKDGESMPTVMNAANEVAVAAFLSGRIKFTDIARSIEKTMDLHHPRSLSSIEDVIEIDQWGRERCSELLQSF.

Positions 10, 11, 12, 13, 36, 38, and 122 each coordinate NADPH. K123 is a 1-deoxy-D-xylulose 5-phosphate binding site. E124 lines the NADPH pocket. A Mn(2+)-binding site is contributed by D148. Residues S149, E150, S174, and H197 each contribute to the 1-deoxy-D-xylulose 5-phosphate site. Mn(2+) is bound at residue E150. G203 provides a ligand contact to NADPH. The 1-deoxy-D-xylulose 5-phosphate site is built by S210, N215, K216, and E219. E219 provides a ligand contact to Mn(2+).

This sequence belongs to the DXR family. It depends on Mg(2+) as a cofactor. Requires Mn(2+) as cofactor.

It catalyses the reaction 2-C-methyl-D-erythritol 4-phosphate + NADP(+) = 1-deoxy-D-xylulose 5-phosphate + NADPH + H(+). It functions in the pathway isoprenoid biosynthesis; isopentenyl diphosphate biosynthesis via DXP pathway; isopentenyl diphosphate from 1-deoxy-D-xylulose 5-phosphate: step 1/6. In terms of biological role, catalyzes the NADPH-dependent rearrangement and reduction of 1-deoxy-D-xylulose-5-phosphate (DXP) to 2-C-methyl-D-erythritol 4-phosphate (MEP). This Geotalea daltonii (strain DSM 22248 / JCM 15807 / FRC-32) (Geobacter daltonii) protein is 1-deoxy-D-xylulose 5-phosphate reductoisomerase.